A 242-amino-acid polypeptide reads, in one-letter code: Small ribosomal subunit protein eS6 (242 aa).

Over residues 219-229 (EKKSEKAEEKK) the composition is skewed to basic and acidic residues. The interval 219 to 242 (EKKSEKAEEKKRRASSLRTQSVQA) is disordered. Phosphoserine is present on residues Ser233 and Ser234.

The protein belongs to the eukaryotic ribosomal protein eS6 family. Post-translationally, phosphorylated.

The chain is Small ribosomal subunit protein eS6 (RPS6) from Yarrowia lipolytica (strain CLIB 122 / E 150) (Yeast).